Consider the following 66-residue polypeptide: Large ribosomal subunit protein bL33c (66 aa).

This sequence belongs to the bacterial ribosomal protein bL33 family.

The protein localises to the plastid. Its subcellular location is the chloroplast. In Acorus calamus (Sweet flag), this protein is Large ribosomal subunit protein bL33c.